The sequence spans 383 residues: 1-deoxy-D-xylulose 5-phosphate reductoisomerase (383 aa).

NADPH-binding residues include T10, G11, S12, I13, G36, R37, N38, and N122. K123 serves as a coordination point for 1-deoxy-D-xylulose 5-phosphate. An NADPH-binding site is contributed by E124. Mn(2+) is bound at residue D148. Positions 149, 150, 174, and 197 each coordinate 1-deoxy-D-xylulose 5-phosphate. Position 150 (E150) interacts with Mn(2+). Residue G203 participates in NADPH binding. 1-deoxy-D-xylulose 5-phosphate-binding residues include S210, N215, K216, and E219. Position 219 (E219) interacts with Mn(2+).

It belongs to the DXR family. Mg(2+) is required as a cofactor. Mn(2+) serves as cofactor.

It carries out the reaction 2-C-methyl-D-erythritol 4-phosphate + NADP(+) = 1-deoxy-D-xylulose 5-phosphate + NADPH + H(+). The protein operates within isoprenoid biosynthesis; isopentenyl diphosphate biosynthesis via DXP pathway; isopentenyl diphosphate from 1-deoxy-D-xylulose 5-phosphate: step 1/6. Catalyzes the NADPH-dependent rearrangement and reduction of 1-deoxy-D-xylulose-5-phosphate (DXP) to 2-C-methyl-D-erythritol 4-phosphate (MEP). This chain is 1-deoxy-D-xylulose 5-phosphate reductoisomerase, found in Bacillus pumilus (strain SAFR-032).